Here is a 283-residue protein sequence, read N- to C-terminus: Phosphatidylglycerol--prolipoprotein diacylglyceryl transferase (283 aa).

4 consecutive transmembrane segments (helical) span residues 20–40 (LGPV…FVAM), 51–71 (GGNP…GIIG), 97–117 (ITNG…AVYF), and 123–143 (GVAF…AQAI). Position 145 (R145) interacts with a 1,2-diacyl-sn-glycero-3-phospho-(1'-sn-glycerol). The next 2 membrane-spanning stretches (helical) occupy residues 192–212 (VHPT…VLLW) and 255–275 (INVI…FALR).

The protein belongs to the Lgt family.

The protein localises to the cell membrane. The catalysed reaction is L-cysteinyl-[prolipoprotein] + a 1,2-diacyl-sn-glycero-3-phospho-(1'-sn-glycerol) = an S-1,2-diacyl-sn-glyceryl-L-cysteinyl-[prolipoprotein] + sn-glycerol 1-phosphate + H(+). The protein operates within protein modification; lipoprotein biosynthesis (diacylglyceryl transfer). In terms of biological role, catalyzes the transfer of the diacylglyceryl group from phosphatidylglycerol to the sulfhydryl group of the N-terminal cysteine of a prolipoprotein, the first step in the formation of mature lipoproteins. This Corynebacterium diphtheriae (strain ATCC 700971 / NCTC 13129 / Biotype gravis) protein is Phosphatidylglycerol--prolipoprotein diacylglyceryl transferase.